The chain runs to 313 residues: Cytosolic Fe-S cluster assembly factor NUBP1 homolog (313 aa).

Positions M1–G25 are disordered. Residues C12, C26, C29, and C35 each coordinate [4Fe-4S] cluster. ATP is bound at residue G66–S73. [4Fe-4S] cluster contacts are provided by C240 and C243.

Belongs to the Mrp/NBP35 ATP-binding proteins family. NUBP1/NBP35 subfamily. As to quaternary structure, heterotetramer of 2 NUBP1 and 2 NUBP2 chains. The cofactor is [4Fe-4S] cluster. As to expression, expressed in head amphid and labial ciliated sensory neurons and tail phasmid ciliated chemosensory neurons.

The protein resides in the cytoplasm. The protein localises to the cell projection. Component of the cytosolic iron-sulfur (Fe/S) protein assembly (CIA) machinery. Required for maturation of extramitochondrial Fe-S proteins. The NUBP1-NUBP2 heterotetramer forms a Fe-S scaffold complex, mediating the de novo assembly of an Fe-S cluster and its transfer to target apoproteins. Regulates cilium formation and structure. The protein is Cytosolic Fe-S cluster assembly factor NUBP1 homolog of Caenorhabditis elegans.